We begin with the raw amino-acid sequence, 1014 residues long: Klotho (1014 aa).

Positions 1-35 (MPASAPPRRPRPPPPSLSLSLLLVLLGLAGRRLRA) are cleaved as a signal peptide. Residues 36-983 (EPGDGAQTWA…ECSFFHTRKP (948 aa)) lie on the Extracellular side of the membrane. Glycosyl hydrolase-1 regions lie at residues 59–508 (FQGT…KNGF) and 517–955 (LEGT…SNGF). 6 N-linked (GlcNAc...) asparagine glycosylation sites follow: Asn-161, Asn-285, Asn-346, Asn-609, Asn-614, and Asn-696. A helical membrane pass occupies residues 984–1004 (LVAFIAFLFFAFIVSLSLIFY). At 1005–1014 (YSKKGRRRYQ) the chain is on the cytoplasmic side.

This sequence belongs to the glycosyl hydrolase 1 family. Klotho subfamily. As to quaternary structure, homodimer. Interacts with FGF23 and FGFR1.

It localises to the cell membrane. The protein resides in the apical cell membrane. Its subcellular location is the secreted. It catalyses the reaction a beta-D-glucuronoside + H2O = D-glucuronate + an alcohol. Its function is as follows. May have weak glycosidase activity towards glucuronylated steroids. However, it lacks essential active site Glu residues at positions 241 and 874, suggesting it may be inactive as a glycosidase in vivo. May be involved in the regulation of calcium and phosphorus homeostasis by inhibiting the synthesis of active vitamin D. Essential factor for the specific interaction between FGF23 and FGFR1. The Klotho peptide generated by cleavage of the membrane-bound isoform may be an anti-aging circulating hormone which would extend life span by inhibiting insulin/IGF1 signaling. The protein is Klotho (KL) of Macaca fascicularis (Crab-eating macaque).